Consider the following 258-residue polypeptide: Acyl-[acyl-carrier-protein]--UDP-N-acetylglucosamine O-acyltransferase (258 aa).

The protein belongs to the transferase hexapeptide repeat family. LpxA subfamily. Homotrimer.

The protein resides in the cytoplasm. The catalysed reaction is a (3R)-hydroxyacyl-[ACP] + UDP-N-acetyl-alpha-D-glucosamine = a UDP-3-O-[(3R)-3-hydroxyacyl]-N-acetyl-alpha-D-glucosamine + holo-[ACP]. It functions in the pathway glycolipid biosynthesis; lipid IV(A) biosynthesis; lipid IV(A) from (3R)-3-hydroxytetradecanoyl-[acyl-carrier-protein] and UDP-N-acetyl-alpha-D-glucosamine: step 1/6. Involved in the biosynthesis of lipid A, a phosphorylated glycolipid that anchors the lipopolysaccharide to the outer membrane of the cell. The polypeptide is Acyl-[acyl-carrier-protein]--UDP-N-acetylglucosamine O-acyltransferase (Neisseria gonorrhoeae (strain ATCC 700825 / FA 1090)).